We begin with the raw amino-acid sequence, 300 residues long: MNRRTDADSWDPASSVGATATMVAASRARASRGPDALLDDRLAEPLVRAVGLQPLVRMIDGDTAVDDPPSSPRSLNEQIAVRTRYFDDFFTAAGAGGIRQAVILASGLDTRAYRLNWPSGMTVYEIDQPQVIEFKTRTLAEFGALPCPDHRPIGIDLREDWPSALRQRGFDAGQPTAWIAEGLLVYLPPEAQDRLFDNIAELSTPGSQVATEHFPDPNGFSGPRAQRLSERWRRMGLDLDMAELIYHGDRNTVIDYLADHGWRVRARTFEEMHAHNGFEPPDDEMMALFGGMSYVTGIRK.

S-adenosyl-L-methionine is bound by residues Asp127 and 156–157 (DL).

The protein belongs to the UPF0677 family.

Functionally, exhibits S-adenosyl-L-methionine-dependent methyltransferase activity. This chain is Putative S-adenosyl-L-methionine-dependent methyltransferase MMAR_1058, found in Mycobacterium marinum (strain ATCC BAA-535 / M).